The chain runs to 313 residues: Protein PHOSPHATE-INDUCED 1 (313 aa).

The first 22 residues, 1–22 (MATSHFILKLFLVISFCNVCFA), serve as a signal peptide directing secretion. Residue asparagine 119 is glycosylated (N-linked (GlcNAc...) asparagine).

The protein belongs to the EXORDIUM family.

It is found in the secreted. The protein resides in the extracellular space. Its subcellular location is the apoplast. Functionally, may be involved in the regulation of cell division. The protein is Protein PHOSPHATE-INDUCED 1 of Nicotiana tabacum (Common tobacco).